The chain runs to 122 residues: Large ribosomal subunit protein uL14 (122 aa).

Belongs to the universal ribosomal protein uL14 family. In terms of assembly, part of the 50S ribosomal subunit. Forms a cluster with proteins L3 and L19. In the 70S ribosome, L14 and L19 interact and together make contacts with the 16S rRNA in bridges B5 and B8.

In terms of biological role, binds to 23S rRNA. Forms part of two intersubunit bridges in the 70S ribosome. The polypeptide is Large ribosomal subunit protein uL14 (Chelativorans sp. (strain BNC1)).